A 382-amino-acid polypeptide reads, in one-letter code: DNA double-strand break repair protein Mre11 (382 aa).

The Mn(2+) site is built by D8, H10, D49, and D84. The active-site Proton donor is H85. Mn(2+) contacts are provided by H156, H187, and H189.

It belongs to the MRE11/RAD32 family. As to quaternary structure, homodimer. Forms a heterotetramer composed of two Mre11 subunits and two Rad50 subunits. Interacts with Rad50 and HerA. Mn(2+) serves as cofactor.

Nuclease activity is regulated by Rad50. Part of the Rad50/Mre11 complex, which is involved in the early steps of DNA double-strand break (DSB) repair. The complex may facilitate opening of the processed DNA ends to aid in the recruitment of HerA and NurA. Mre11 binds to DSB ends and has both double-stranded 3'-5' exonuclease activity and single-stranded endonuclease activity. Recruited immediately to chromosomal DNA after gamma irradiation, and remains DNA bound in the course of DNA repair. The chain is DNA double-strand break repair protein Mre11 from Sulfolobus acidocaldarius (strain ATCC 33909 / DSM 639 / JCM 8929 / NBRC 15157 / NCIMB 11770).